We begin with the raw amino-acid sequence, 367 residues long: Probable glutamine synthetase (367 aa).

The region spanning Ile-30–Met-110 is the GS beta-grasp domain. In terms of domain architecture, GS catalytic spans His-117–Phe-367.

This sequence belongs to the glutamine synthetase family. In terms of assembly, homooctamer.

It localises to the cytoplasm. The enzyme catalyses L-glutamate + NH4(+) + ATP = L-glutamine + ADP + phosphate + H(+). This Caenorhabditis elegans protein is Probable glutamine synthetase (gln-2).